We begin with the raw amino-acid sequence, 330 residues long: RNA/RNP complex-1-interacting phosphatase (330 aa).

The segment covering 1 to 12 has biased composition (basic residues); it reads MSQWHHPRSGWG. Positions 1-32 are disordered; the sequence is MSQWHHPRSGWGRRRDFSGRSSAKKKGGNHIP. The region spanning 61 to 208 is the Tyrosine-protein phosphatase domain; sequence FEKKLAPEEC…LQNGPIRKNW (148 aa). The Phosphocysteine intermediate role is filled by Cys-152. 153–158 contributes to the substrate binding site; that stretch reads THGLNR. Arg-158 serves as the catalytic Proton donor/acceptor.

It belongs to the protein-tyrosine phosphatase family. Non-receptor class dual specificity subfamily. Monomer. May interact with SFRS7 and SFRS9/SRP30C.

The protein localises to the nucleus. It localises to the nucleus speckle. Its function is as follows. Possesses RNA 5'-triphosphatase and diphosphatase activities, but displays a poor protein-tyrosine phosphatase activity. In addition, has phosphatase activity with ATP, ADP and O-methylfluorescein phosphate (in vitro). Binds to RNA. May participate in nuclear mRNA metabolism. In Homo sapiens (Human), this protein is RNA/RNP complex-1-interacting phosphatase.